A 99-amino-acid polypeptide reads, in one-letter code: MPAISRDEVAHLARLSRLALSDAELDEFAGQLDSILNHVKVVTEVAADDVPPMANPNAVTNVTRPDVIVPGLTPEQALSGAPAVEQDRFAVPQILGEGE.

The protein belongs to the GatC family. Heterotrimer of A, B and C subunits.

It catalyses the reaction L-glutamyl-tRNA(Gln) + L-glutamine + ATP + H2O = L-glutaminyl-tRNA(Gln) + L-glutamate + ADP + phosphate + H(+). The enzyme catalyses L-aspartyl-tRNA(Asn) + L-glutamine + ATP + H2O = L-asparaginyl-tRNA(Asn) + L-glutamate + ADP + phosphate + 2 H(+). Its function is as follows. Allows the formation of correctly charged Asn-tRNA(Asn) or Gln-tRNA(Gln) through the transamidation of misacylated Asp-tRNA(Asn) or Glu-tRNA(Gln) in organisms which lack either or both of asparaginyl-tRNA or glutaminyl-tRNA synthetases. The reaction takes place in the presence of glutamine and ATP through an activated phospho-Asp-tRNA(Asn) or phospho-Glu-tRNA(Gln). The polypeptide is Aspartyl/glutamyl-tRNA(Asn/Gln) amidotransferase subunit C (Rhodococcus erythropolis (strain PR4 / NBRC 100887)).